Consider the following 425-residue polypeptide: Adenylosuccinate synthetase (425 aa).

GTP contacts are provided by residues 12–18 and 40–42; these read GDEGKGK and GHT. Catalysis depends on D13, which acts as the Proton acceptor. 2 residues coordinate Mg(2+): D13 and G40. IMP is bound by residues 13–16, 38–41, T129, R143, N221, T236, and R300; these read DEGK and NAGH. The active-site Proton donor is the H41. 296-302 provides a ligand contact to substrate; it reads VTTGRKR. GTP contacts are provided by residues R302, 328–330, and 410–412; these read KLD and GVG.

It belongs to the adenylosuccinate synthetase family. Homodimer. It depends on Mg(2+) as a cofactor.

The protein localises to the cytoplasm. The enzyme catalyses IMP + L-aspartate + GTP = N(6)-(1,2-dicarboxyethyl)-AMP + GDP + phosphate + 2 H(+). The protein operates within purine metabolism; AMP biosynthesis via de novo pathway; AMP from IMP: step 1/2. Its function is as follows. Plays an important role in the de novo pathway and in the salvage pathway of purine nucleotide biosynthesis. Catalyzes the first committed step in the biosynthesis of AMP from IMP. This Phaeosphaeria nodorum (strain SN15 / ATCC MYA-4574 / FGSC 10173) (Glume blotch fungus) protein is Adenylosuccinate synthetase.